The following is a 370-amino-acid chain: D-aspartate oxidase (370 aa).

The FAD site is built by Ile15, Ala49, Ser50, Gly54, Val166, Arg317, Gly346, and Gln348. Positions 368–370 (ARL) match the Microbody targeting signal motif.

This sequence belongs to the DAMOX/DASOX family. As to quaternary structure, homotetramer. The cofactor is FAD.

The protein resides in the peroxisome matrix. The catalysed reaction is D-aspartate + O2 + H2O = oxaloacetate + H2O2 + NH4(+). The enzyme catalyses D-glutamate + O2 + H2O = H2O2 + 2-oxoglutarate + NH4(+). Inhibited by malonate and D-malate. Very mildly inhibited by benzoate, ethylenediaminetetraacetic acid (EDTA), crotonate and anthranilate. May be very mildly inhibited by meso-tartrate. Functionally, selectively catalyzes the oxidative deamination of acidic amino acids. Protects the organism from the toxicity of D-amino acids. Enables the organism to utilize D-amino acids as a source of nutrients. Enables the organism to utilize D-aspartate as a source of nitrogen and carbon. The protein is D-aspartate oxidase of Vanrija humicola (Yeast).